A 712-amino-acid polypeptide reads, in one-letter code: Methylmalonyl-CoA mutase (712 aa).

Residues 73–77 (TVRQY), 183–185 (TIQ), arginine 195, lysine 222, histidine 232, and 271–273 (RLS) contribute to the substrate site. The B12-binding domain occupies 580–712 (KPKIMVAKLG…DLIEGKRRNV (133 aa)). An adenosylcob(III)alamin-binding site is contributed by histidine 593.

The protein belongs to the methylmalonyl-CoA mutase family. As to quaternary structure, homodimer. The cofactor is adenosylcob(III)alamin. A monovalent cation is required as a cofactor.

It carries out the reaction (R)-methylmalonyl-CoA = succinyl-CoA. The protein operates within metabolic intermediate metabolism; propanoyl-CoA degradation; succinyl-CoA from propanoyl-CoA: step 3/3. Its function is as follows. Radical enzyme that catalyzes the transformation of methylmalonyl-CoA to succinyl-CoA. Is required for growth on the polyhydroxyalkanoate degradation pathway intermediates 3-hydroxybutyrate and acetoacetate as sole carbon source. The polypeptide is Methylmalonyl-CoA mutase (Rhizobium meliloti (strain 1021) (Ensifer meliloti)).